Reading from the N-terminus, the 265-residue chain is Putative carbamate hydrolase RutD (265 aa).

In terms of domain architecture, AB hydrolase-1 spans 21-123 (PILLSAGMGG…TIVNGWARAD (103 aa)).

It belongs to the AB hydrolase superfamily. Hydrolase RutD family.

The enzyme catalyses carbamate + 2 H(+) = NH4(+) + CO2. In terms of biological role, involved in pyrimidine catabolism. May facilitate the hydrolysis of carbamate, a reaction that can also occur spontaneously. This is Putative carbamate hydrolase RutD from Azorhizobium caulinodans (strain ATCC 43989 / DSM 5975 / JCM 20966 / LMG 6465 / NBRC 14845 / NCIMB 13405 / ORS 571).